The sequence spans 384 residues: Urea transporter 1 (384 aa).

5 helical membrane-spanning segments follow: residues 61 to 81, 85 to 105, 111 to 131, 138 to 158, and 168 to 188; these read ISQV…AGLL, PWWA…ALLL, AIAA…MAVF, FWWL…FSSA, and LPVF…ATGH. A glycan (N-linked (GlcNAc...) asparagine) is linked at Asn206. 4 helical membrane passes run 250–270, 279–299, 305–325, and 327–347; these read LMCL…LSLA, GLWG…FMAL, LLAL…THLM, and AVHL…FLLL.

The protein belongs to the urea transporter family. As to quaternary structure, homotrimer; each subunit contains a pore through which urea permeates. Identified in a complex with STOM. As to expression, expressed in brain, spleen, kidney, testis and lung, with highest levels in brain.

The protein resides in the cell membrane. It localises to the basolateral cell membrane. It carries out the reaction urea(in) = urea(out). Mediates the transport of urea driven by a concentration gradient across the cell membrane. Mediates the transport of urea across the cell membranes of erythrocytes and the renal inner medullary collecting duct which is critical to the urinary concentrating mechanism. Facilitates water transport in erythrocytes. This is Urea transporter 1 (Slc14a1) from Rattus norvegicus (Rat).